The sequence spans 132 residues: Ribosome-binding factor A (132 aa).

The protein belongs to the RbfA family. As to quaternary structure, monomer. Binds 30S ribosomal subunits, but not 50S ribosomal subunits or 70S ribosomes.

The protein resides in the cytoplasm. Functionally, one of several proteins that assist in the late maturation steps of the functional core of the 30S ribosomal subunit. Associates with free 30S ribosomal subunits (but not with 30S subunits that are part of 70S ribosomes or polysomes). Required for efficient processing of 16S rRNA. May interact with the 5'-terminal helix region of 16S rRNA. This chain is Ribosome-binding factor A, found in Rhizorhabdus wittichii (strain DSM 6014 / CCUG 31198 / JCM 15750 / NBRC 105917 / EY 4224 / RW1) (Sphingomonas wittichii).